The sequence spans 471 residues: MARWPWRWRVLLPLLLLHSSPVFAQEGQDNDPSTLFKRASEMMNLRKYDGSLGLLNAVLEVDPNHSEAYRQRASVLRHKCRYKEAEGDYSKYLELKPGSSSVEKELSQLLQAQNALESAYGQFESHDFSKVLEYINKIVLVFSPNCLKAKLLKAKALLALEDYSSVISETGFILKEDEDNLDALLLRGRAYYYLADHDVASRHYQKGLRLDPEHSELKKAYFGLKNLLKKTKSAEDNAAKGKLRVSAEDYKAALAMDPDHTSYNVHLYLGLCKVLVKLGRGKEAISSCTEALNIDGELVDALTQRGEAKLLTEDWEGAVQDLKEASQKSPQDMGIREALMRAEKQLKLSKRKDWYKILGISKTASAADIKRAYKKLALQWHPDKNVDNREEAENMFREIAAAYEVLGDEDKRVRYDRGEDLDEMNMGGGGGGFNPFGGGGQQYTFHYDGGFYGGGGFPGGGFPGGFQFNFG.

Residues 1–24 (MARWPWRWRVLLPLLLLHSSPVFA) form the signal peptide. 8 TPR repeats span residues 32–65 (PSTL…DPNH), 66–99 (SEAY…KPGS), 112–146 (AQNA…SPNC), 148–180 (KAKL…DEDN), 181–214 (LDAL…DPEH), 227–260 (LLKK…DPDH), 265–298 (VHLY…DGEL), and 300–332 (DALT…SPQD). N-linked (GlcNAc...) asparagine glycosylation occurs at Asn-64. Positions 353–419 (DWYKILGISK…DKRVRYDRGE (67 aa)) constitute a J domain.

In terms of assembly, interacts with BIP1.

It is found in the endoplasmic reticulum lumen. In terms of biological role, may play a role in protein folding in the endoplasmic reticulum. The polypeptide is DnaJ protein P58IPK homolog B (Oryza sativa subsp. japonica (Rice)).